The chain runs to 347 residues: NHL repeat-containing protein 3 (347 aa).

An N-terminal signal peptide occupies residues 1–25 (MARFWVCVAGAGFFLAFLVLHSRFC). N-linked (GlcNAc...) asparagine glycosylation occurs at asparagine 32. An NHL 1 repeat occupies 47 to 93 (RLDVGWPKHPEYFTGTTFCVAVDSLNGLVYIGQRGDNIPKILVFTED). N-linked (GlcNAc...) asparagine glycosylation occurs at asparagine 101. 2 NHL repeats span residues 150-196 (TPGK…LSQD) and 200-243 (LWLH…FDKD). N-linked (GlcNAc...) asparagine glycosylation is found at asparagine 206 and asparagine 278. The NHL 4 repeat unit spans residues 294-338 (GECSVISTIQLADQVLPHLLEVDRKTGAVYVAEIGAKQVQKYVPL).

It localises to the secreted. This Homo sapiens (Human) protein is NHL repeat-containing protein 3 (NHLRC3).